The sequence spans 409 residues: Homoserine O-succinyltransferase (409 aa).

One can recognise an AB hydrolase-1 domain in the interval 43 to 380 (NAIVVCHALN…PHGHDAFLLD (338 aa)). Ser-149 (nucleophile) is an active-site residue. Arg-219 contacts substrate. Positions 244–268 (TLPAARGSLPPEGTDPTRGGPASDR) are disordered. Residues Asp-341 and His-374 contribute to the active site. Position 375 (Asp-375) interacts with substrate.

Belongs to the AB hydrolase superfamily. MetX family. As to quaternary structure, homodimer.

Its subcellular location is the cytoplasm. The catalysed reaction is L-homoserine + succinyl-CoA = O-succinyl-L-homoserine + CoA. It functions in the pathway amino-acid biosynthesis; L-methionine biosynthesis via de novo pathway; O-succinyl-L-homoserine from L-homoserine: step 1/1. Its function is as follows. Transfers a succinyl group from succinyl-CoA to L-homoserine, forming succinyl-L-homoserine. The protein is Homoserine O-succinyltransferase of Comamonas testosteroni (strain DSM 14576 / KF-1) (Pseudomonas testosteroni).